Consider the following 460-residue polypeptide: Phosphoglucomutase (460 aa).

The active-site Phosphoserine intermediate is serine 103. Serine 103 is a binding site for Mg(2+). Substrate is bound by residues 103 to 104 (SH) and lysine 113. The Mg(2+) site is built by aspartate 239, aspartate 241, and aspartate 243. Residues 243–244 (DR), threonine 303, and 322–324 (EMS) each bind substrate.

The protein belongs to the phosphohexose mutase family. It depends on Mg(2+) as a cofactor.

Its subcellular location is the cytoplasm. The enzyme catalyses alpha-D-glucose 1-phosphate = alpha-D-glucose 6-phosphate. This enzyme participates in both the breakdown and synthesis of glucose. The chain is Phosphoglucomutase (pgm) from Neisseria gonorrhoeae.